The sequence spans 117 residues: DNA-directed RNA polymerase subunit omega (117 aa).

The protein belongs to the RNA polymerase subunit omega family. As to quaternary structure, the RNAP catalytic core consists of 2 alpha, 1 beta, 1 beta' and 1 omega subunit. When a sigma factor is associated with the core the holoenzyme is formed, which can initiate transcription.

The catalysed reaction is RNA(n) + a ribonucleoside 5'-triphosphate = RNA(n+1) + diphosphate. In terms of biological role, promotes RNA polymerase assembly. Latches the N- and C-terminal regions of the beta' subunit thereby facilitating its interaction with the beta and alpha subunits. This Ruegeria sp. (strain TM1040) (Silicibacter sp.) protein is DNA-directed RNA polymerase subunit omega.